We begin with the raw amino-acid sequence, 522 residues long: Zinc finger protein 892 (522 aa).

2 disordered regions span residues 1–22 (MEPE…GNPK) and 96–124 (AASQ…ESAP). Residues 100–116 (KHWETIPESKELTPEKD) show a composition bias toward basic and acidic residues. C2H2-type zinc fingers lie at residues 221 to 243 (WKCN…QRIH), 249 to 271 (YECN…QRIH), 277 to 299 (YECH…HIIH), 305 to 327 (YECN…QRIH), 333 to 355 (YECN…QVIH), 361 to 383 (YKCN…QRTH), 389 to 411 (YECN…QRTH), 417 to 439 (YKCN…QRTH), 445 to 467 (YKCK…QKTH), and 473 to 495 (YKCK…QKTH).

Belongs to the krueppel C2H2-type zinc-finger protein family.

It localises to the nucleus. Functionally, may be involved in transcriptional regulation. This chain is Zinc finger protein 892, found in Homo sapiens (Human).